Here is a 185-residue protein sequence, read N- to C-terminus: MKSGEKDYSVKEAMIFSQRIAQLSKALWKCVEKDWQMWIKPYDLNINEHHILTIAYHLKGASISEIAKFGVMHVSTAFNFSKKLEERGYLVFSKKEDDKRNTYIEITDKGEELLLRLMEEYDPENNSVFNGALALRNFYGKFPENIELIAILRNIYGQDFIDIFEKSLEDIEENFTESDQKLVKK.

The HTH marR-type domain maps to A13 to G157. Positions I63–E86 form a DNA-binding region, H-T-H motif.

In terms of assembly, homodimer.

Its function is as follows. Negative regulator of protease production and sporulation. The polypeptide is HTH-type transcriptional regulator Hpr (Bacillus anthracis (strain CDC 684 / NRRL 3495)).